Reading from the N-terminus, the 341-residue chain is HTH-type sugar sensing transcriptional regulator TrmBL1 (341 aa).

A DNA-binding region (H-T-H motif) is located at residues 32–53 (SKATDVTKESGIPHTRIYDVLS).

It belongs to the transcriptional regulator TrmB family. Homotetramer. Forms homooctamers in the presence of maltotriose or maltose.

With respect to regulation, repressor activity is regulated by binding of different sugars to TrmBL1. Binding of maltose and maltotriose results in derepression of the target genes. However, high sugar concentration results in formation of octamers with high affinity for DNA, which may prevent transcription of target genes. Global transcriptional repressor of the maltodextrin transport gene cluster (mdxE operon) and most likely of all genes encoding glycolytic enzymes. Acts by binding to the conserved TGM (Thermococcales-Glycolytic-Motif) sequences in their promoter region. Can also interact with non-TGM sequences. This Pyrococcus furiosus (strain ATCC 43587 / DSM 3638 / JCM 8422 / Vc1) protein is HTH-type sugar sensing transcriptional regulator TrmBL1 (trmBL1).